We begin with the raw amino-acid sequence, 339 residues long: Dihydroorotate dehydrogenase (quinone) (339 aa).

FMN contacts are provided by residues 62 to 66 and Thr-86; that span reads AGMDK. Residue Lys-66 coordinates substrate. 111 to 115 is a substrate binding site; sequence NRMGF. Residues Asn-139 and Asn-172 each coordinate FMN. Substrate is bound at residue Asn-172. Ser-175 acts as the Nucleophile in catalysis. Asn-177 contacts substrate. FMN contacts are provided by Lys-217 and Thr-245. 246 to 247 is a substrate binding site; the sequence is NT. Residues Gly-268, Gly-297, and 318–319 contribute to the FMN site; that span reads YS.

This sequence belongs to the dihydroorotate dehydrogenase family. Type 2 subfamily. As to quaternary structure, monomer. It depends on FMN as a cofactor.

Its subcellular location is the cell membrane. It catalyses the reaction (S)-dihydroorotate + a quinone = orotate + a quinol. The protein operates within pyrimidine metabolism; UMP biosynthesis via de novo pathway; orotate from (S)-dihydroorotate (quinone route): step 1/1. Catalyzes the conversion of dihydroorotate to orotate with quinone as electron acceptor. This chain is Dihydroorotate dehydrogenase (quinone), found in Shewanella piezotolerans (strain WP3 / JCM 13877).